We begin with the raw amino-acid sequence, 511 residues long: Piperic acid synthase CYP719A37 (511 aa).

Residues 7–27 (VDPALFSAFVSIIFFFLGMFL) form a helical membrane-spanning segment. Position 455 (Cys455) interacts with heme.

Belongs to the cytochrome P450 family. Requires heme as cofactor. Specifically expressed in immature fruits and roots. Barely detectable in young leaves and flowering spadices.

It localises to the membrane. It is found in the endoplasmic reticulum membrane. The catalysed reaction is (E,E)-feruperate + reduced [NADPH--hemoprotein reductase] + O2 = (E,E)-piperate + oxidized [NADPH--hemoprotein reductase] + 2 H2O + H(+). The protein operates within aromatic compound metabolism. Its function is as follows. Cytochrome P450 monooxygenase involved in the biosynthesis of aromatic piperamides natural products such as piperine (1-piperoyl-piperidine), the pungent principle contributing, together with several terpenoids, to the aromatic properties of black pepper fruits, and displaying numerous pharmacological activities such as antiproliferative, antitumor, antiangiogenesis, antioxidant, antidiabetic, antiobesity, cardioprotective, antimicrobial, antiaging, and immunomodulatory effects. Catalyzes the conversion of feruperic acid (5-(4-hydroxy-3-methoxyphenyl)-2,4-pentadienoic acid) to piperic acid. Inactive toward ferulic acid and feruperine. The sequence is that of Piperic acid synthase CYP719A37 from Piper nigrum (Black pepper).